A 177-amino-acid polypeptide reads, in one-letter code: Adenine phosphoribosyltransferase (177 aa).

The protein belongs to the purine/pyrimidine phosphoribosyltransferase family. In terms of assembly, homodimer.

It is found in the cytoplasm. The catalysed reaction is AMP + diphosphate = 5-phospho-alpha-D-ribose 1-diphosphate + adenine. It functions in the pathway purine metabolism; AMP biosynthesis via salvage pathway; AMP from adenine: step 1/1. Catalyzes a salvage reaction resulting in the formation of AMP, that is energically less costly than de novo synthesis. This chain is Adenine phosphoribosyltransferase, found in Rhodococcus jostii (strain RHA1).